The primary structure comprises 566 residues: Chaperone Ric-8 (566 aa).

Belongs to the synembryn family. Interacts with GDP-bound G(i)-alpha protein. Does not interact with G-alpha proteins when they are in complex with subunits beta and gamma. Interacts with Frq2 in a Ca(2+)-independent manner but does not interact with Frq1.

It is found in the cytoplasm. The protein localises to the cell cortex. It localises to the presynapse. Chaperone that specifically binds and folds some, but not all, nascent G alpha proteins prior to G protein heterotrimer formation, promoting their stability and activity. Also acts as a guanine nucleotide exchange factor (GEF) for G alpha proteins by stimulating exchange of bound GDP for free GTP. Plays a key role in asymmetric spindle positioning, a step for asymmetric cell division that generates cell diversity during development by activating G(i) alpha protein independently of G-protein coupled receptors. Required during gastrulation and sensory organ precursor (SOP) formation. Plays a role in positively regulating synapse number and neurotransmitter release. This is Chaperone Ric-8 (ric8a) from Drosophila pseudoobscura pseudoobscura (Fruit fly).